The chain runs to 1134 residues: TBC1 domain family member 8 (1134 aa).

2 GRAM domains span residues 145 to 212 and 285 to 353; these read VKFE…ERTS and EFFR…EKME. The segment at 433–466 is disordered; it reads ASQSSEEREEKRPLPHPEPLTAVFQQSGSQSPDS. The segment covering 437–447 has biased composition (basic and acidic residues); that stretch reads SEEREEKRPLP. The segment covering 455–466 has biased composition (polar residues); that stretch reads VFQQSGSQSPDS. One can recognise a Rab-GAP TBC domain in the interval 504-691; that stretch reads GIPESLRGRL…HVVDCFFYDG (188 aa). Residues 1034-1070 form a disordered region; that stretch reads SSSGSCSQECEEPQASAPPEQDSVFAEAGKSPQAFPE.

Functionally, may act as a GTPase-activating protein for Rab family protein(s). The chain is TBC1 domain family member 8 (Tbc1d8) from Mus musculus (Mouse).